We begin with the raw amino-acid sequence, 37 residues long: Brevinin-2DYe (37 aa).

Cys31 and Cys37 are disulfide-bonded.

Expressed by the skin glands.

Its subcellular location is the secreted. Its function is as follows. Antimicrobial peptide. Active against the Gram-positive bacterium S.aureus (MIC=15 uM) and the Gram-negative bacterium E.coli (MIC=30 uM). This Rana dybowskii (Dybovsky's frog) protein is Brevinin-2DYe.